The sequence spans 241 residues: Centromere protein H (241 aa).

An N-acetylmethionine modification is found at M1. Residues 1–24 (MEEQPRERSEAGAEACEEKRGLSQ) form a disordered region. Residues 28–186 (ERIEDRISLL…KEDVDKMENS (159 aa)) are a coiled coil. Residue K61 forms a Glycyl lysine isopeptide (Lys-Gly) (interchain with G-Cter in SUMO2) linkage. Phosphothreonine is present on T62.

It belongs to the CENP-H/MCM16 family. In terms of assembly, self-associates. Component of the CENPA-NAC complex, at least composed of CENPA, CENPC, CENPH, CENPM, CENPN, CENPT and CENPU. The CENPA-NAC complex interacts with the CENPA-CAD complex, composed of CENPI, CENPK, CENPL, CENPO, CENPP, CENPQ, CENPR and CENPS. Interacts directly with CENPK. Interacts with KIF2C and NDC80. Interacts with TRIM36. Abundantly expressed in thymus, spleen, uterus, ovary, testis and muscle, and weakly expressed in small intestine, lung and stomach. Barely detectable expression in kidney, liver, skin and prostate gland. Not detected in brain, heart or adrenal gland. Also expressed weakly in various hematopoietic cell lines.

It is found in the nucleus. Its subcellular location is the chromosome. It localises to the centromere. The protein resides in the kinetochore. In terms of biological role, component of the CENPA-NAC (nucleosome-associated) complex, a complex that plays a central role in assembly of kinetochore proteins, mitotic progression and chromosome segregation. The CENPA-NAC complex recruits the CENPA-CAD (nucleosome distal) complex and may be involved in incorporation of newly synthesized CENPA into centromeres. Required for chromosome congression and efficiently align the chromosomes on a metaphase plate. This Mus musculus (Mouse) protein is Centromere protein H.